The primary structure comprises 683 residues: U4/U6 small nuclear ribonucleoprotein Prp3 (683 aa).

Residues 1 to 87 (MALSKRELDE…HSKSSSDRSR (87 aa)) form the PWI domain. Basic and acidic residues predominate over residues 73–107 (GRSSRHSKSSSDRSRKRDLKEVFGDDSEISKESSG). The tract at residues 73-135 (GRSSRHSKSS…IPGPPSESPG (63 aa)) is disordered. Lys139 is covalently cross-linked (Glycyl lysine isopeptide (Lys-Gly) (interchain with G-Cter in SUMO2)). The segment at 153–183 (IEERKKQLSFISPPTPQPKTPSSSQPERLPI) is disordered. Ser164 carries the phosphoserine modification. Thr167 bears the Phosphothreonine mark. Glycyl lysine isopeptide (Lys-Gly) (interchain with G-Cter in SUMO2) cross-links involve residues Lys244 and Lys252. The mediates interaction with SART3 stretch occupies residues 416–550 (NLVEHPAQLN…VHISVYRVRN (135 aa)). Ser619 carries the phosphoserine modification.

In terms of assembly, component of the precatalytic spliceosome (spliceosome B complex). Component of the U4/U6-U5 tri-snRNP complex, a building block of the precatalytic spliceosome (spliceosome B complex). The U4/U6-U5 tri-snRNP complex is composed of the U4, U6 and U5 snRNAs and at least PRPF3, PRPF4, PRPF6, PRPF8, PRPF31, SNRNP200, TXNL4A, SNRNP40, SNRPB, SNRPD1, SNRPD2, SNRPD3, SNRPE, SNRPF, SNRPG, DDX23, CD2BP2, PPIH, SNU13, EFTUD2, SART1 and USP39, plus LSM2, LSM3, LSM4, LSM5, LSM6, LSM7 and LSM8. Interacts directly with PRPF4. Part of a heteromeric complex containing PPIH, PRPF3 and PRPF4 that is stable in the absence of RNA. Interacts with SART3; the interaction is direct and recruits the deubiquitinase USP4 to PRPF3. Interacts with PRPF19. Interacts ('Lys-63'-linked polyubiquitinated) with PRPF8 (via the MPN (JAB/Mov34) domain); may stabilize the U4/U6-U5 tri-snRNP complex. Interacts with ERCC6. Ubiquitinated. Undergoes 'Lys-63'-linked polyubiquitination by PRPF19 and deubiquitination by USP4. 'Lys-63'-linked ubiquitination increases the affinity for PRPF8 and may regulate the assembly of the U4/U6-U5 tri-snRNP complex.

The protein resides in the nucleus. Its subcellular location is the nucleus speckle. Plays a role in pre-mRNA splicing as component of the U4/U6-U5 tri-snRNP complex that is involved in spliceosome assembly, and as component of the precatalytic spliceosome (spliceosome B complex). This chain is U4/U6 small nuclear ribonucleoprotein Prp3 (PRPF3), found in Bos taurus (Bovine).